The following is a 139-amino-acid chain: Large-conductance mechanosensitive channel (139 aa).

A run of 2 helical transmembrane segments spans residues 14-34 (VVDM…VKSL) and 86-106 (GLFI…FLLI).

It belongs to the MscL family. As to quaternary structure, homopentamer.

The protein localises to the cell inner membrane. Functionally, channel that opens in response to stretch forces in the membrane lipid bilayer. May participate in the regulation of osmotic pressure changes within the cell. This is Large-conductance mechanosensitive channel from Methylobacillus flagellatus (strain ATCC 51484 / DSM 6875 / VKM B-1610 / KT).